We begin with the raw amino-acid sequence, 778 residues long: Ral guanine nucleotide dissociation stimulator-like 2 (778 aa).

Over residues 1-15 the composition is skewed to low complexity; sequence MLPRPLRLLLDTTPP. A disordered region spans residues 1 to 59; that stretch reads MLPRPLRLLLDTTPPGGVVLSSFRSRDPEEGGDPGGRAVGGGQEEEDEEEEEASVSVWD. A compositionally biased stretch (gly residues) spans 33–42; the sequence is DPGGRAVGGG. The segment covering 43–59 has biased composition (acidic residues); it reads QEEEDEEEEEASVSVWD. Residues 88–212 enclose the N-terminal Ras-GEF domain; sequence SSRRLRAGTL…GSADLIRNLR (125 aa). A Ras-GEF domain is found at 243–513; sequence LADHLAEQLT…HRVSCEVEPP (271 aa). 4 disordered regions span residues 503 to 524, 541 to 564, 581 to 647, and 735 to 769; these read SHRV…ARTP, GGPT…GTPA, SLDS…GPGS, and RRPS…IKAT. Low complexity predominate over residues 581 to 592; it reads SLDSALESSPSL. The span at 620–632 shows a compositional bias: polar residues; that stretch reads CGSPLSGNTGEGT. One can recognise a Ras-associating domain in the interval 649-736; sequence DCRIIRVQME…HDFLLRQRRR (88 aa). Residues 738–756 are compositionally biased toward low complexity; it reads SAATPGSHSGPSASGTPPS.

In terms of assembly, interacts with SAMD9.

Probable guanine nucleotide exchange factor. Putative effector of Ras and/or Rap. Associates with the GTP-bound form of Rap 1A and H-Ras in vitro. The chain is Ral guanine nucleotide dissociation stimulator-like 2 (Rgl2) from Mus musculus (Mouse).